A 102-amino-acid polypeptide reads, in one-letter code: Co-chaperonin GroES (102 aa).

The protein belongs to the GroES chaperonin family. Heptamer of 7 subunits arranged in a ring. Interacts with the chaperonin GroEL.

It is found in the cytoplasm. Functionally, together with the chaperonin GroEL, plays an essential role in assisting protein folding. The GroEL-GroES system forms a nano-cage that allows encapsulation of the non-native substrate proteins and provides a physical environment optimized to promote and accelerate protein folding. GroES binds to the apical surface of the GroEL ring, thereby capping the opening of the GroEL channel. The chain is Co-chaperonin GroES from Chlamydia pneumoniae (Chlamydophila pneumoniae).